Consider the following 193-residue polypeptide: Holliday junction branch migration complex subunit RuvA (193 aa).

The segment at 1–64 (MIGRIAGILL…EDANLLYGFL (64 aa)) is domain I. The interval 65–139 (TPQERTTFRE…GKLGADLGEL (75 aa)) is domain II. The segment at 139-143 (LAGAA) is flexible linker. The segment at 144–193 (SPSDHATDILNALLALGYSEKEGLAAIKNVPAGTGVSEGIKLALKALSKV) is domain III.

It belongs to the RuvA family. In terms of assembly, homotetramer. Forms an RuvA(8)-RuvB(12)-Holliday junction (HJ) complex. HJ DNA is sandwiched between 2 RuvA tetramers; dsDNA enters through RuvA and exits via RuvB. An RuvB hexamer assembles on each DNA strand where it exits the tetramer. Each RuvB hexamer is contacted by two RuvA subunits (via domain III) on 2 adjacent RuvB subunits; this complex drives branch migration. In the full resolvosome a probable DNA-RuvA(4)-RuvB(12)-RuvC(2) complex forms which resolves the HJ.

The protein localises to the cytoplasm. Its function is as follows. The RuvA-RuvB-RuvC complex processes Holliday junction (HJ) DNA during genetic recombination and DNA repair, while the RuvA-RuvB complex plays an important role in the rescue of blocked DNA replication forks via replication fork reversal (RFR). RuvA specifically binds to HJ cruciform DNA, conferring on it an open structure. The RuvB hexamer acts as an ATP-dependent pump, pulling dsDNA into and through the RuvAB complex. HJ branch migration allows RuvC to scan DNA until it finds its consensus sequence, where it cleaves and resolves the cruciform DNA. This chain is Holliday junction branch migration complex subunit RuvA, found in Burkholderia lata (strain ATCC 17760 / DSM 23089 / LMG 22485 / NCIMB 9086 / R18194 / 383).